A 129-amino-acid chain; its full sequence is UPF0102 protein RD1_1191 (129 aa).

It belongs to the UPF0102 family.

This chain is UPF0102 protein RD1_1191, found in Roseobacter denitrificans (strain ATCC 33942 / OCh 114) (Erythrobacter sp. (strain OCh 114)).